The sequence spans 170 residues: Crossover junction endodeoxyribonuclease RuvC (170 aa).

Active-site residues include D11, E71, and D143. Residues D11, E71, and D143 each coordinate Mg(2+).

This sequence belongs to the RuvC family. In terms of assembly, homodimer which binds Holliday junction (HJ) DNA. The HJ becomes 2-fold symmetrical on binding to RuvC with unstacked arms; it has a different conformation from HJ DNA in complex with RuvA. In the full resolvosome a probable DNA-RuvA(4)-RuvB(12)-RuvC(2) complex forms which resolves the HJ. It depends on Mg(2+) as a cofactor.

Its subcellular location is the cytoplasm. It catalyses the reaction Endonucleolytic cleavage at a junction such as a reciprocal single-stranded crossover between two homologous DNA duplexes (Holliday junction).. Functionally, the RuvA-RuvB-RuvC complex processes Holliday junction (HJ) DNA during genetic recombination and DNA repair. Endonuclease that resolves HJ intermediates. Cleaves cruciform DNA by making single-stranded nicks across the HJ at symmetrical positions within the homologous arms, yielding a 5'-phosphate and a 3'-hydroxyl group; requires a central core of homology in the junction. The consensus cleavage sequence is 5'-(A/T)TT(C/G)-3'. Cleavage occurs on the 3'-side of the TT dinucleotide at the point of strand exchange. HJ branch migration catalyzed by RuvA-RuvB allows RuvC to scan DNA until it finds its consensus sequence, where it cleaves and resolves the cruciform DNA. This chain is Crossover junction endodeoxyribonuclease RuvC, found in Rhizobium rhizogenes (strain K84 / ATCC BAA-868) (Agrobacterium radiobacter).